Consider the following 167-residue polypeptide: EF-hand calcium-binding domain-containing protein 11 (167 aa).

EF-hand domains follow at residues 17–52 (AERK…LFGY), 91–126 (DPYE…VAPR), and 127–162 (LQER…GLAN). The Ca(2+) site is built by Asp140, Asp142, Asp144, His146, and Asp151.

The chain is EF-hand calcium-binding domain-containing protein 11 (efcab11) from Danio rerio (Zebrafish).